The chain runs to 510 residues: Chromosomal replication initiator protein DnaA (510 aa).

The interval 1-87 (MSVELWQQCV…IGSRRSSAPR (87 aa)) is domain I, interacts with DnaA modulators. Residues 87–173 (RAAPNAPVSA…QVEGALKHTS (87 aa)) form a domain II region. A disordered region spans residues 140–160 (DSFDAMAEPASAPASSGRAEQ). The span at 144–157 (AMAEPASAPASSGR) shows a compositional bias: low complexity. A domain III, AAA+ region region spans residues 174–390 (YLNRTFTFDT…GALKRVIAHS (217 aa)). Positions 218, 220, 221, and 222 each coordinate ATP. Residues 391-510 (HFMGRDITIE…YKNLLRTLTT (120 aa)) are domain IV, binds dsDNA.

Belongs to the DnaA family. In terms of assembly, oligomerizes as a right-handed, spiral filament on DNA at oriC.

The protein resides in the cytoplasm. Functionally, plays an essential role in the initiation and regulation of chromosomal replication. ATP-DnaA binds to the origin of replication (oriC) to initiate formation of the DNA replication initiation complex once per cell cycle. Binds the DnaA box (a 9 base pair repeat at the origin) and separates the double-stranded (ds)DNA. Forms a right-handed helical filament on oriC DNA; dsDNA binds to the exterior of the filament while single-stranded (ss)DNA is stabiized in the filament's interior. The ATP-DnaA-oriC complex binds and stabilizes one strand of the AT-rich DNA unwinding element (DUE), permitting loading of DNA polymerase. After initiation quickly degrades to an ADP-DnaA complex that is not apt for DNA replication. Binds acidic phospholipids. This Pseudomonas putida (strain GB-1) protein is Chromosomal replication initiator protein DnaA.